The sequence spans 277 residues: Putative phosphoenolpyruvate synthase regulatory protein (277 aa).

157–164 (GVSRCGKT) is an ADP binding site.

It belongs to the pyruvate, phosphate/water dikinase regulatory protein family. PSRP subfamily.

It catalyses the reaction [pyruvate, water dikinase] + ADP = [pyruvate, water dikinase]-phosphate + AMP + H(+). The enzyme catalyses [pyruvate, water dikinase]-phosphate + phosphate + H(+) = [pyruvate, water dikinase] + diphosphate. In terms of biological role, bifunctional serine/threonine kinase and phosphorylase involved in the regulation of the phosphoenolpyruvate synthase (PEPS) by catalyzing its phosphorylation/dephosphorylation. This Klebsiella pneumoniae (strain 342) protein is Putative phosphoenolpyruvate synthase regulatory protein.